Here is a 226-residue protein sequence, read N- to C-terminus: Agamous-like MADS-box protein AGL23 (226 aa).

The 61-residue stretch at 6 to 66 folds into the MADS-box domain; the sequence is LGRRKVEIVK…GKVFSFGHPN (61 aa). The stretch at 95–132 forms a coiled coil; it reads VQMLNKSYTEVKAEVEKEQKNKQSRAQNERENENAEEW. Residues 108 to 127 are compositionally biased toward basic and acidic residues; sequence EVEKEQKNKQSRAQNERENE. The interval 108–131 is disordered; sequence EVEKEQKNKQSRAQNERENENAEE.

The protein localises to the nucleus. Functionally, probable transcription factor that controls female gametophyte (megagametogenesis) development and chloroplast biogenesis during embryo development. This is Agamous-like MADS-box protein AGL23 from Arabidopsis thaliana (Mouse-ear cress).